A 138-amino-acid polypeptide reads, in one-letter code: Acidic phospholipase A2 PePLA2 (138 aa).

The first 16 residues, 1-16, serve as a signal peptide directing secretion; that stretch reads MRTLWIMAVLLLGVEG. 7 cysteine pairs are disulfide-bonded: C42–C131, C44–C60, C59–C110, C65–C138, C66–C103, C73–C97, and C91–C101. Ca(2+) contacts are provided by Y43, G45, and G47. The active site involves H63. Position 64 (D64) interacts with Ca(2+). D104 is a catalytic residue.

Belongs to the phospholipase A2 family. Group II subfamily. D49 sub-subfamily. It depends on Ca(2+) as a cofactor. In terms of tissue distribution, expressed by the venom gland.

The protein localises to the secreted. It carries out the reaction a 1,2-diacyl-sn-glycero-3-phosphocholine + H2O = a 1-acyl-sn-glycero-3-phosphocholine + a fatty acid + H(+). Functionally, PLA2 catalyzes the calcium-dependent hydrolysis of the 2-acyl groups in 3-sn-phosphoglycerides. This chain is Acidic phospholipase A2 PePLA2, found in Protobothrops elegans (Elegant pitviper).